We begin with the raw amino-acid sequence, 424 residues long: Histidine--tRNA ligase (424 aa).

It belongs to the class-II aminoacyl-tRNA synthetase family. As to quaternary structure, homodimer.

The protein localises to the cytoplasm. It catalyses the reaction tRNA(His) + L-histidine + ATP = L-histidyl-tRNA(His) + AMP + diphosphate + H(+). This Escherichia coli O127:H6 (strain E2348/69 / EPEC) protein is Histidine--tRNA ligase.